A 405-amino-acid chain; its full sequence is Dematin (405 aa).

Disordered regions lie at residues 1-30 (MERL…PSSI), 79-158 (PRSR…GSPQ), 173-192 (FPAA…TDYW), and 203-332 (TEWR…DRGN). The span at 11–29 (SPGSVSPSRDSSVPGSPSS) shows a compositional bias: low complexity. A phosphoserine mark is found at Ser-16, Ser-18, Ser-26, Ser-92, Ser-96, Ser-105, Ser-110, Ser-113, and Ser-156. Residues 108–123 (IISQASAPRTTGTPRT) are compositionally biased toward polar residues. The segment covering 216–227 (EEEEEEEDDDSG) has biased composition (acidic residues). An interaction with RASGRF2 region spans residues 224-308 (DDSGEEMKAL…SRLQSTEFSP (85 aa)). Position 226 is a phosphoserine (Ser-226). 2 stretches are compositionally biased toward basic and acidic residues: residues 228–242 (EEMK…EELS) and 252–261 (ILKEEMEKSL). Ser-269, Ser-279, Ser-289, Ser-303, Ser-315, Ser-333, Ser-372, and Ser-383 each carry phosphoserine. Residues 276-322 (FHTSLHQGTSKSSSLPAYGRTTLSRLQSTEFSPSGSETGSPGLQNGE) show a composition bias toward polar residues. Residues 337–405 (VLEQKIYPYE…NELKKKASLF (69 aa)) form the HP domain. Residue Ser-403 is modified to Phosphoserine; by PKA.

Belongs to the villin/gelsolin family. As to quaternary structure, monomeric (isoform 2); under reducing conditions. Self-associates. Exists under oxidizing condition as a trimer of two isoforms 2 and isoform 1 linked by disulfide bonds. Found in a complex with DMTN, F-actin and spectrin. Found in a complex with ADD2, DMTN and SLC2A1. Interacts with F-actin, ITPKB, RASGRF2 and spectrin. Isoform 2 interacts with SLC2A1 (via C-terminus cytoplasmic region). Isoform 1 and isoform 2 interact (phosphorylated form) with plasmodium berghei 14-3-3 protein; the interaction occurs in a PKA-dependent manner. Phosphorylated. Phosphorylation at Ser-403 by PKA causes the C-terminal headpiece domain to associate with the N-terminal core domain, and leads to the inhibition of its actin bundling activity. In terms of processing, the N-terminus is blocked. As to expression, expressed in platelets (at protein level). Expressed in heart, brain, lung, skeletal muscle, and kidney.

It localises to the cytoplasm. The protein localises to the cytosol. The protein resides in the perinuclear region. Its subcellular location is the cytoskeleton. It is found in the cell membrane. It localises to the membrane. The protein localises to the endomembrane system. The protein resides in the cell projection. Functionally, membrane-cytoskeleton-associated protein with F-actin-binding activity that induces F-actin bundles formation and stabilization. Its F-actin-bundling activity is reversibly regulated upon its phosphorylation by the cAMP-dependent protein kinase A (PKA). Binds to the erythrocyte membrane glucose transporter-1 SLC2A1/GLUT1, and hence stabilizes and attaches the spectrin-actin network to the erythrocytic plasma membrane. Plays a role in maintaining the functional integrity of PKA-activated erythrocyte shape and the membrane mechanical properties. Also plays a role as a modulator of actin dynamics in fibroblasts; acts as a negative regulator of the RhoA activation pathway. In platelets, functions as a regulator of internal calcium mobilization across the dense tubular system that affects platelet granule secretion pathways and aggregation. Also required for the formation of a diverse set of cell protrusions, such as filopodia and lamellipodia, necessary for platelet cell spreading, motility and migration. Acts as a tumor suppressor and inhibits malignant cell transformation. The sequence is that of Dematin (DMTN) from Homo sapiens (Human).